The chain runs to 206 residues: Probable 5-formyltetrahydrofolate cyclo-ligase (206 aa).

ATP-binding positions include lysine 8–arginine 12 and arginine 12. Substrate is bound by residues valine 54, glutamate 59, and histidine 146 to tyrosine 150. Arginine 143–tyrosine 151 serves as a coordination point for ATP. Mg(2+) contacts are provided by aspartate 152 and aspartate 188.

It belongs to the 5-formyltetrahydrofolate cyclo-ligase family. In terms of assembly, monomer. Mg(2+) is required as a cofactor.

The protein resides in the cytoplasm. It carries out the reaction (6S)-5-formyl-5,6,7,8-tetrahydrofolate + ATP = (6R)-5,10-methenyltetrahydrofolate + ADP + phosphate. Functionally, contributes to tetrahydrofolate metabolism. Helps regulate carbon flow through the folate-dependent one-carbon metabolic network that supplies carbon for the biosynthesis of purines, thymidine and amino acids. Catalyzes the irreversible conversion of 5-formyltetrahydrofolate (5-CHO-H(4)PteGlu) to yield 5,10-methenyltetrahydrofolate. This chain is Probable 5-formyltetrahydrofolate cyclo-ligase, found in Caenorhabditis elegans.